We begin with the raw amino-acid sequence, 467 residues long: UDP-N-acetylmuramate--L-alanine ligase (467 aa).

ATP is bound at residue 114 to 120 (GTHGKTT).

It belongs to the MurCDEF family.

The protein localises to the cytoplasm. The enzyme catalyses UDP-N-acetyl-alpha-D-muramate + L-alanine + ATP = UDP-N-acetyl-alpha-D-muramoyl-L-alanine + ADP + phosphate + H(+). It functions in the pathway cell wall biogenesis; peptidoglycan biosynthesis. In terms of biological role, cell wall formation. The chain is UDP-N-acetylmuramate--L-alanine ligase from Rhodopseudomonas palustris (strain TIE-1).